Reading from the N-terminus, the 260-residue chain is Uridylate kinase (260 aa).

29 to 32 (KLSG) serves as a coordination point for ATP. The interval 37–42 (GDLGYG) is involved in allosteric activation by GTP. Gly71 contributes to the UMP binding site. Residues Gly72 and Arg76 each coordinate ATP. Residues Asp91 and 152-159 (SGNPFFTT) contribute to the UMP site. Residues Thr179, Tyr185, and Asp188 each contribute to the ATP site.

The protein belongs to the UMP kinase family. Homohexamer.

It localises to the cytoplasm. It catalyses the reaction UMP + ATP = UDP + ADP. It functions in the pathway pyrimidine metabolism; CTP biosynthesis via de novo pathway; UDP from UMP (UMPK route): step 1/1. Allosterically activated by GTP. Inhibited by UTP. Its function is as follows. Catalyzes the reversible phosphorylation of UMP to UDP. In Synechocystis sp. (strain ATCC 27184 / PCC 6803 / Kazusa), this protein is Uridylate kinase.